Reading from the N-terminus, the 188-residue chain is Ribosome maturation factor RimP (188 aa).

The protein belongs to the RimP family.

The protein localises to the cytoplasm. Its function is as follows. Required for maturation of 30S ribosomal subunits. In Corynebacterium aurimucosum (strain ATCC 700975 / DSM 44827 / CIP 107346 / CN-1) (Corynebacterium nigricans), this protein is Ribosome maturation factor RimP.